A 245-amino-acid polypeptide reads, in one-letter code: Zinc finger protein AZF1 (245 aa).

The span at 1–15 (MALETLNSPTATTTA) shows a compositional bias: polar residues. 2 disordered regions span residues 1-57 (MALE…NKNL) and 112-141 (LGGH…SHSN). The segment at 97–119 (YKCTVCGKSFSSYQALGGHKTSH) adopts a C2H2-type 1 zinc-finger fold. Over residues 123-134 (TNTSITSGNQEL) the composition is skewed to polar residues. A C2H2-type 2 zinc finger spans residues 164 to 186 (HTCSICFKSFASGQALGGHKRCH). Residues 193-231 (GNGNGSSSNSVELVAGSDVSDVDNERWSEESAIGGHRGF) form a disordered region.

In terms of tissue distribution, highly expressed in roots and at lower levels in leaves and stems.

It localises to the nucleus. Its function is as follows. Transcriptional repressor involved in the inhibition of plant growth under abiotic stress conditions. Can repress the expression of various genes, including osmotic stress and abscisic acid-repressive genes and auxin-inducible genes, by binding to their promoter regions in a DNA sequence-specific manner. This is Zinc finger protein AZF1 (AZF1) from Arabidopsis thaliana (Mouse-ear cress).